A 265-amino-acid chain; its full sequence is UDP-N-acetylenolpyruvoylglucosamine reductase (265 aa).

In terms of domain architecture, FAD-binding PCMH-type spans 15 to 169 (GVGGPAELWT…TRVRLKLKER (155 aa)). The active site involves R149. The segment at 182–203 (DRARKGQPKRKSAGCAFKNPPG) is disordered. C196 functions as the Proton donor in the catalytic mechanism.

Belongs to the MurB family. Requires FAD as cofactor.

It localises to the cytoplasm. The enzyme catalyses UDP-N-acetyl-alpha-D-muramate + NADP(+) = UDP-N-acetyl-3-O-(1-carboxyvinyl)-alpha-D-glucosamine + NADPH + H(+). Its pathway is cell wall biogenesis; peptidoglycan biosynthesis. Its function is as follows. Cell wall formation. The polypeptide is UDP-N-acetylenolpyruvoylglucosamine reductase (Thermus thermophilus (strain ATCC 27634 / DSM 579 / HB8)).